Reading from the N-terminus, the 247-residue chain is 3-deoxy-manno-octulosonate cytidylyltransferase (247 aa).

This sequence belongs to the KdsB family.

It is found in the cytoplasm. The catalysed reaction is 3-deoxy-alpha-D-manno-oct-2-ulosonate + CTP = CMP-3-deoxy-beta-D-manno-octulosonate + diphosphate. The protein operates within nucleotide-sugar biosynthesis; CMP-3-deoxy-D-manno-octulosonate biosynthesis; CMP-3-deoxy-D-manno-octulosonate from 3-deoxy-D-manno-octulosonate and CTP: step 1/1. It participates in bacterial outer membrane biogenesis; lipopolysaccharide biosynthesis. In terms of biological role, activates KDO (a required 8-carbon sugar) for incorporation into bacterial lipopolysaccharide in Gram-negative bacteria. The protein is 3-deoxy-manno-octulosonate cytidylyltransferase of Methylorubrum extorquens (strain CM4 / NCIMB 13688) (Methylobacterium extorquens).